Consider the following 613-residue polypeptide: Phosphomethylpyrimidine synthase (613 aa).

Residues Asn-215, Met-244, Tyr-273, His-309, Ser-329–Gly-331, Asp-370–Arg-373, and Glu-409 each bind substrate. Residue His-413 coordinates Zn(2+). A substrate-binding site is contributed by Tyr-436. Residue His-477 coordinates Zn(2+). [4Fe-4S] cluster is bound by residues Cys-557, Cys-560, and Cys-565.

It belongs to the ThiC family. Homodimer. The cofactor is [4Fe-4S] cluster.

The catalysed reaction is 5-amino-1-(5-phospho-beta-D-ribosyl)imidazole + S-adenosyl-L-methionine = 4-amino-2-methyl-5-(phosphooxymethyl)pyrimidine + CO + 5'-deoxyadenosine + formate + L-methionine + 3 H(+). It participates in cofactor biosynthesis; thiamine diphosphate biosynthesis. Catalyzes the synthesis of the hydroxymethylpyrimidine phosphate (HMP-P) moiety of thiamine from aminoimidazole ribotide (AIR) in a radical S-adenosyl-L-methionine (SAM)-dependent reaction. The sequence is that of Phosphomethylpyrimidine synthase from Paramagnetospirillum magneticum (strain ATCC 700264 / AMB-1) (Magnetospirillum magneticum).